A 590-amino-acid chain; its full sequence is J protein JJJ1 (590 aa).

Residues 3 to 72 enclose the J domain; sequence TCYYELLGVE…RAWYDSHKEQ (70 aa). Residues 269-284 show a composition bias toward basic and acidic residues; the sequence is EQRKLKEQQRKNELNN. The tract at residues 269–293 is disordered; that stretch reads EQRKLKEQQRKNELNNRRKFGNDNN. A C2H2-type 1 zinc finger spans residues 338 to 362; it reads YECFICNKTFKSEKQLKNHINTKLH. Ser393 carries the phosphoserine modification. A disordered region spans residues 441–546; sequence EVEDVSSDEN…TLPSSMSPTS (106 aa). The span at 455-467 shows a compositional bias: basic residues; it reads TKNKKKRKKKKKA. Over residues 480–489 the composition is skewed to basic and acidic residues; the sequence is DDTKDKRSNE. Thr504 bears the Phosphothreonine mark. The segment covering 513–527 has biased composition (basic residues); that stretch reads KAKKKKGKQPKKNSK. Over residues 528–546 the composition is skewed to low complexity; the sequence is STKSTPSLSTLPSSMSPTS. A C2H2-type 2 zinc finger spans residues 549–573; it reads EVCTTCGESFDSRNKLFNHVKIAGH.

Its subcellular location is the nucleus. The sequence is that of J protein JJJ1 (JJJ1) from Saccharomyces cerevisiae (strain ATCC 204508 / S288c) (Baker's yeast).